We begin with the raw amino-acid sequence, 194 residues long: GTP cyclohydrolase 1 (194 aa).

Residues C83, H86, and C155 each contribute to the Zn(2+) site.

Belongs to the GTP cyclohydrolase I family. Toroid-shaped homodecamer, composed of two pentamers of five dimers.

It carries out the reaction GTP + H2O = 7,8-dihydroneopterin 3'-triphosphate + formate + H(+). The protein operates within cofactor biosynthesis; 7,8-dihydroneopterin triphosphate biosynthesis; 7,8-dihydroneopterin triphosphate from GTP: step 1/1. The sequence is that of GTP cyclohydrolase 1 from Streptococcus pyogenes serotype M5 (strain Manfredo).